A 156-amino-acid polypeptide reads, in one-letter code: Small ribosomal subunit protein uS7 (156 aa).

This sequence belongs to the universal ribosomal protein uS7 family. Part of the 30S ribosomal subunit. Contacts proteins S9 and S11.

Functionally, one of the primary rRNA binding proteins, it binds directly to 16S rRNA where it nucleates assembly of the head domain of the 30S subunit. Is located at the subunit interface close to the decoding center, probably blocks exit of the E-site tRNA. In Bordetella bronchiseptica (strain ATCC BAA-588 / NCTC 13252 / RB50) (Alcaligenes bronchisepticus), this protein is Small ribosomal subunit protein uS7.